A 318-amino-acid chain; its full sequence is L-lactate dehydrogenase (318 aa).

NAD(+) contacts are provided by residues V20, D41, K46, Y71, and 85–86 (GA). Substrate contacts are provided by residues Q88, R94, and 126–129 (NPVD). NAD(+) contacts are provided by residues 124–126 (ATN) and S149. A substrate-binding site is contributed by 154 to 157 (DTAR). Residues R159 and H174 each coordinate beta-D-fructose 1,6-bisphosphate. The Proton acceptor role is filled by H181. Y226 is modified (phosphotyrosine). T235 contributes to the substrate binding site.

Belongs to the LDH/MDH superfamily. LDH family. As to quaternary structure, homotetramer.

It localises to the cytoplasm. It catalyses the reaction (S)-lactate + NAD(+) = pyruvate + NADH + H(+). It functions in the pathway fermentation; pyruvate fermentation to lactate; (S)-lactate from pyruvate: step 1/1. With respect to regulation, allosterically activated by fructose 1,6-bisphosphate (FBP). In terms of biological role, catalyzes the conversion of lactate to pyruvate. This Priestia megaterium (Bacillus megaterium) protein is L-lactate dehydrogenase.